Here is a 314-residue protein sequence, read N- to C-terminus: Putative lipoprotein LppW (314 aa).

An N-terminal signal peptide occupies residues 1–22; it reads MRARPLTLLTALAAVTLVVVAG. A lipid anchor (N-palmitoyl cysteine) is attached at C23. A lipid anchor (S-diacylglycerol cysteine) is attached at C23.

The protein localises to the cell membrane. The chain is Putative lipoprotein LppW (lppW) from Mycobacterium bovis (strain ATCC BAA-935 / AF2122/97).